Reading from the N-terminus, the 209-residue chain is Imidazole glycerol phosphate synthase subunit HisH (209 aa).

In terms of domain architecture, Glutamine amidotransferase type-1 spans 1 to 205 (MIAIIDYGMG…QGVVEAWKSS (205 aa)). Cys79 functions as the Nucleophile in the catalytic mechanism. Residues His180 and Glu182 contribute to the active site.

Heterodimer of HisH and HisF.

Its subcellular location is the cytoplasm. The catalysed reaction is 5-[(5-phospho-1-deoxy-D-ribulos-1-ylimino)methylamino]-1-(5-phospho-beta-D-ribosyl)imidazole-4-carboxamide + L-glutamine = D-erythro-1-(imidazol-4-yl)glycerol 3-phosphate + 5-amino-1-(5-phospho-beta-D-ribosyl)imidazole-4-carboxamide + L-glutamate + H(+). It catalyses the reaction L-glutamine + H2O = L-glutamate + NH4(+). Its pathway is amino-acid biosynthesis; L-histidine biosynthesis; L-histidine from 5-phospho-alpha-D-ribose 1-diphosphate: step 5/9. In terms of biological role, IGPS catalyzes the conversion of PRFAR and glutamine to IGP, AICAR and glutamate. The HisH subunit catalyzes the hydrolysis of glutamine to glutamate and ammonia as part of the synthesis of IGP and AICAR. The resulting ammonia molecule is channeled to the active site of HisF. This is Imidazole glycerol phosphate synthase subunit HisH from Bacillus cereus (strain ATCC 14579 / DSM 31 / CCUG 7414 / JCM 2152 / NBRC 15305 / NCIMB 9373 / NCTC 2599 / NRRL B-3711).